The following is a 348-amino-acid chain: Heat-inducible transcription repressor HrcA (348 aa).

Belongs to the HrcA family.

Negative regulator of class I heat shock genes (grpE-dnaK-dnaJ and groELS operons). Prevents heat-shock induction of these operons. This chain is Heat-inducible transcription repressor HrcA, found in Thermomicrobium roseum (strain ATCC 27502 / DSM 5159 / P-2).